We begin with the raw amino-acid sequence, 1582 residues long: Nik-related protein kinase (1582 aa).

A Protein kinase domain is found at 25–313 (FSLDKTIGLG…SANMLQHPFV (289 aa)). ATP is bound by residues 31–39 (IGLGTYGRI) and Lys-54. Asp-177 (proton acceptor) is an active-site residue. Composition is skewed to low complexity over residues 492 to 507 (QVQS…QTQT), 527 to 538 (PEQQRQGQAPEQ), and 551 to 572 (EQNQ…AQAE). The tract at residues 492 to 579 (QVQSQVSKKQ…QAETEAEEPE (88 aa)) is disordered. A coiled-coil region spans residues 725–759 (QRRQRRWEDIFNQHEEELRQVDKDKEDESSDNDEV). Disordered stretches follow at residues 783–859 (EVQE…PPYS) and 926–1156 (ASAD…GSGM). Polar residues-rich tracts occupy residues 803–814 (FSSSVPQRSLLE), 825–834 (RSSQNRQNWL), and 850–859 (RRSQSSPPYS). 2 positions are modified to phosphoserine: Ser-852 and Ser-855. Over residues 926-944 (ASADTDGDDDDESNDTFED) the composition is skewed to acidic residues. 2 stretches are compositionally biased toward basic and acidic residues: residues 965-978 (VCKD…KFVD) and 999-1016 (GSCK…EEAY). Phosphoserine is present on residues Ser-1027, Ser-1031, and Ser-1034. Composition is skewed to basic and acidic residues over residues 1043–1061 (QEEH…EGDG) and 1125–1135 (PDHESDNKDIS). The span at 1136 to 1154 (ESSTQSDFSANHSSPSKGS) shows a compositional bias: polar residues. Residues 1209–1552 (TSEICCGSLW…RFLCTRGDKL (344 aa)) enclose the CNH domain.

This sequence belongs to the protein kinase superfamily. STE Ser/Thr protein kinase family. STE20 subfamily.

It catalyses the reaction L-seryl-[protein] + ATP = O-phospho-L-seryl-[protein] + ADP + H(+). The enzyme catalyses L-threonyl-[protein] + ATP = O-phospho-L-threonyl-[protein] + ADP + H(+). May phosphorylate cofilin-1 and induce actin polymerization through this process, during the late stages of embryogenesis. Involved in the TNF-alpha-induced signaling pathway. The protein is Nik-related protein kinase (NRK) of Homo sapiens (Human).